The sequence spans 379 residues: Chaperone protein DnaJ (379 aa).

The J domain occupies 5-70; that stretch reads DYYEVLGVEK…QKRAAYDQYG (66 aa). Residues 133–211 form a CR-type zinc finger; it reads GKSVEIRVPT…CHGQGRVEKT (79 aa). Cysteine 146, cysteine 149, cysteine 163, cysteine 166, cysteine 185, cysteine 188, cysteine 199, and cysteine 202 together coordinate Zn(2+). 4 CXXCXGXG motif repeats span residues 146–153, 163–170, 185–192, and 199–206; these read CDTCDGSG, CTTCHGQG, CPTCGGKG, and CDVCHGQG.

This sequence belongs to the DnaJ family. Homodimer. It depends on Zn(2+) as a cofactor.

It localises to the cytoplasm. Functionally, participates actively in the response to hyperosmotic and heat shock by preventing the aggregation of stress-denatured proteins and by disaggregating proteins, also in an autonomous, DnaK-independent fashion. Unfolded proteins bind initially to DnaJ; upon interaction with the DnaJ-bound protein, DnaK hydrolyzes its bound ATP, resulting in the formation of a stable complex. GrpE releases ADP from DnaK; ATP binding to DnaK triggers the release of the substrate protein, thus completing the reaction cycle. Several rounds of ATP-dependent interactions between DnaJ, DnaK and GrpE are required for fully efficient folding. Also involved, together with DnaK and GrpE, in the DNA replication of plasmids through activation of initiation proteins. In Pseudoalteromonas atlantica (strain T6c / ATCC BAA-1087), this protein is Chaperone protein DnaJ.